Consider the following 374-residue polypeptide: CC-adding tRNA nucleotidyltransferase (374 aa).

Residue 39-42 (GAVR) participates in CTP binding. Residues Asp-52 and Asp-54 each coordinate Mg(2+). Residues 126–127 (RD), Asn-131, 171–180 (DASRLVRAAR), and Arg-209 contribute to the CTP site.

The protein belongs to the tRNA nucleotidyltransferase/poly(A) polymerase family. It depends on Mg(2+) as a cofactor.

The catalysed reaction is a tRNA precursor + 2 CTP = a tRNA with a 3' CC end + 2 diphosphate. TRNA nucleotidyltransferase involved in the synthesis of the tRNA CCA terminus. Adds the two cytidine residues to tRNA. The polypeptide is CC-adding tRNA nucleotidyltransferase (Deinococcus radiodurans (strain ATCC 13939 / DSM 20539 / JCM 16871 / CCUG 27074 / LMG 4051 / NBRC 15346 / NCIMB 9279 / VKM B-1422 / R1)).